We begin with the raw amino-acid sequence, 2570 residues long: Stabilin-1 (2570 aa).

An N-terminal signal peptide occupies residues 1–25; it reads MAGPRGLLPLCLLAFCLAGFSFVRG. Residues 26-2478 lie on the Extracellular side of the membrane; it reads QVLFKGCDVK…LAPEAPPVAA (2453 aa). EGF-like domains lie at 110–148, 156–193, 195–229, and 232–271; these read HECPGGAETPCNGHGTCLDGMDRNGTCVCQENFRGSACQ, FGPDCQSVCSCVHGVCNHGPRGDGSCLCFAGYTGPHCD, ELPVCQELRCPQNTQCSAEAPSCRCLPGYTQQGSE, and APNPCWPSPCSLLAQCSVSPKGQAQCHCPENYHGDGMVCL. Cystine bridges form between Cys-112-Cys-126, Cys-120-Cys-136, Cys-138-Cys-147, Cys-160-Cys-171, Cys-164-Cys-181, Cys-183-Cys-192, Cys-199-Cys-210, Cys-204-Cys-217, Cys-236-Cys-247, Cys-241-Cys-257, and Cys-259-Cys-270. The N-linked (GlcNAc...) asparagine glycan is linked to Asn-133. N-linked (GlcNAc...) asparagine glycosylation is found at Asn-286, Asn-312, Asn-413, Asn-606, Asn-673, Asn-712, and Asn-745. FAS1 domains follow at residues 356–494 and 506–641; these read YGHL…TGLR and KRTI…DGIL. The region spanning 728–768 is the EGF-like 5 domain; it reads DCTQCPGGFSNPCYGKGNCSDGIQGNGACLCFPDYKGIACH. Disulfide bonds link Cys-732–Cys-746, Cys-740–Cys-756, and Cys-758–Cys-767. Asn-816 carries an N-linked (GlcNAc...) asparagine glycan. EGF-like domains are found at residues 818 to 858, 861 to 903, 904 to 946, and 947 to 986; these read SMGD…DGFS, PSNP…RVCV, AIDE…YQCS, and PIDPCRAGNGGCHGLATCRAVGGGQRVCTCPPGFGGDGFS. Intrachain disulfides connect Cys-822/Cys-837, Cys-831/Cys-846, Cys-865/Cys-879, Cys-873/Cys-889, Cys-891/Cys-902, Cys-908/Cys-922, Cys-916/Cys-932, Cys-934/Cys-945, Cys-951/Cys-964, and Cys-958/Cys-974. 2 FAS1 domains span residues 988–1118 and 1128–1253; these read YGDI…SQVL and GQGL…SGVL. Residues Asn-1087, Asn-1096, Asn-1170, Asn-1178, Asn-1222, and Asn-1274 are each glycosylated (N-linked (GlcNAc...) asparagine). In terms of domain architecture, Laminin EGF-like 1 spans 1327–1392; it reads TLCEPCPGGL…CDCAHGLCQE (66 aa). 3 disulfide bridges follow: Cys-1332–Cys-1346, Cys-1340–Cys-1356, and Cys-1358–Cys-1367. N-linked (GlcNAc...) asparagine glycosylation is present at Asn-1378. Intrachain disulfides connect Cys-1379–Cys-1390, Cys-1383–Cys-1400, Cys-1402–Cys-1411, Cys-1420–Cys-1430, Cys-1424–Cys-1440, Cys-1442–Cys-1453, Cys-1459–Cys-1472, Cys-1466–Cys-1482, Cys-1484–Cys-1495, Cys-1501–Cys-1514, Cys-1508–Cys-1524, Cys-1526–Cys-1538, Cys-1544–Cys-1557, Cys-1551–Cys-1567, and Cys-1569–Cys-1581. EGF-like domains follow at residues 1416 to 1454, 1455 to 1496, 1497 to 1539, and 1540 to 1582; these read TSPQCPRKCDPNANCVQDSAGASTCACAAGYSGNGIFCS, EVDP…ELCQ, EINS…RTCE, and LLDP…LTCR. An N-linked (GlcNAc...) asparagine glycan is attached at Asn-1471. FAS1 domains are found at residues 1582 to 1708 and 1724 to 1864; these read RARV…DRVL and PRRN…DQLL. Asn-1626 and Asn-1727 each carry an N-linked (GlcNAc...) asparagine glycan. One can recognise a Laminin EGF-like 2 domain in the interval 1966–2031; the sequence is SECQACPGGP…RCTVHGRCDE (66 aa). 15 disulfides stabilise this stretch: Cys-1971–Cys-1985, Cys-1979–Cys-1995, Cys-1997–Cys-2006, Cys-2018–Cys-2029, Cys-2023–Cys-2039, Cys-2041–Cys-2050, Cys-2060–Cys-2070, Cys-2064–Cys-2076, Cys-2078–Cys-2089, Cys-2095–Cys-2108, Cys-2102–Cys-2117, Cys-2119–Cys-2130, Cys-2136–Cys-2150, Cys-2144–Cys-2160, and Cys-2162–Cys-2173. EGF-like domains lie at 2056 to 2090, 2091 to 2131, and 2132 to 2174; these read LQPVCTPPCAPEAVCRAGNSCECSLGYEGDGRVCT, VADL…WSCR, and ARNP…LQCL. N-linked (GlcNAc...) asparagine glycosylation is present at Asn-2107. The 96-residue stretch at 2206–2301 folds into the Link domain; that stretch reads RAGVFHLQAT…SERWDAYCFR (96 aa). Residues Asn-2222, Asn-2261, Asn-2290, Asn-2334, Asn-2347, Asn-2379, Asn-2393, Asn-2400, and Asn-2424 are each glycosylated (N-linked (GlcNAc...) asparagine). Disulfide bonds link Cys-2230–Cys-2299 and Cys-2254–Cys-2275. In terms of domain architecture, FAS1 7 spans 2322-2459; the sequence is NGKLLDVLAA…GIIHALASPL (138 aa). Residues 2479–2499 traverse the membrane as a helical segment; sequence GVGAVLAAGALLGLVAGALYL. The Cytoplasmic portion of the chain corresponds to 2500 to 2570; the sequence is RARGKPMGFG…PDTQRILTVK (71 aa).

Interacts with CHID1. As to expression, high levels found in spleen, lymph node, liver and placenta. Also expressed in endothelial cells.

The protein localises to the membrane. Functionally, acts as a scavenger receptor for acetylated low density lipoprotein. Binds to both Gram-positive and Gram-negative bacteria and may play a role in defense against bacterial infection. When inhibited in endothelial tube formation assays, there is a marked decrease in cell-cell interactions, suggesting a role in angiogenesis. Involved in the delivery of newly synthesized CHID1/SI-CLP from the biosynthetic compartment to the endosomal/lysosomal system. This chain is Stabilin-1 (STAB1), found in Homo sapiens (Human).